The sequence spans 20 residues: Unknown protein NF040 from 2D-PAGE (20 aa).

A TCTP domain is found at 1–20; it reads MKVYTDIFTRDEFLSDSYPM.

The protein belongs to the TCTP family.

The protein is Unknown protein NF040 from 2D-PAGE of Naegleria fowleri (Brain eating amoeba).